Here is a 390-residue protein sequence, read N- to C-terminus: Heme chaperone HemW (390 aa).

Residues Pro-15–Ala-254 enclose the Radical SAM core domain. S-adenosyl-L-methionine is bound at residue Tyr-24. Positions 30, 34, and 37 each coordinate [4Fe-4S] cluster. S-adenosyl-L-methionine is bound by residues Gly-82, Gly-83–Thr-84, Glu-115, Gln-142, Arg-154, and Asp-179.

Belongs to the anaerobic coproporphyrinogen-III oxidase family. HemW subfamily. The cofactor is [4Fe-4S] cluster.

The protein localises to the cytoplasm. Its function is as follows. Probably acts as a heme chaperone, transferring heme to an unknown acceptor. Binds one molecule of heme per monomer, possibly covalently. Binds 1 [4Fe-4S] cluster. The cluster is coordinated with 3 cysteines and an exchangeable S-adenosyl-L-methionine. The polypeptide is Heme chaperone HemW (Mycobacterium tuberculosis (strain CDC 1551 / Oshkosh)).